Here is a 536-residue protein sequence, read N- to C-terminus: CTP synthase (536 aa).

The tract at residues 1–268 is amidoligase domain; sequence MSTKYVFVTG…DNLVCEKLHL (268 aa). A CTP-binding site is contributed by serine 14. Position 14 (serine 14) interacts with UTP. Residue 15-20 coordinates ATP; it reads ALGKGI. Residue tyrosine 55 participates in L-glutamine binding. Aspartate 72 provides a ligand contact to ATP. Residues aspartate 72 and glutamate 142 each contribute to the Mg(2+) site. Residues 149 to 151, 189 to 194, and lysine 225 contribute to the CTP site; these read DIE and KTKPTQ. UTP contacts are provided by residues 189–194 and lysine 225; that span reads KTKPTQ. A Glutamine amidotransferase type-1 domain is found at 293–535; sequence KIALVGKYVE…IKAALEENKS (243 aa). Glycine 355 is a binding site for L-glutamine. Cysteine 382 functions as the Nucleophile; for glutamine hydrolysis in the catalytic mechanism. Residues 383–386, glutamate 406, and arginine 463 each bind L-glutamine; that span reads LGMQ. Residues histidine 508 and glutamate 510 contribute to the active site.

It belongs to the CTP synthase family. As to quaternary structure, homotetramer.

It carries out the reaction UTP + L-glutamine + ATP + H2O = CTP + L-glutamate + ADP + phosphate + 2 H(+). The enzyme catalyses L-glutamine + H2O = L-glutamate + NH4(+). The catalysed reaction is UTP + NH4(+) + ATP = CTP + ADP + phosphate + 2 H(+). It functions in the pathway pyrimidine metabolism; CTP biosynthesis via de novo pathway; CTP from UDP: step 2/2. Its activity is regulated as follows. Allosterically activated by GTP, when glutamine is the substrate; GTP has no effect on the reaction when ammonia is the substrate. The allosteric effector GTP functions by stabilizing the protein conformation that binds the tetrahedral intermediate(s) formed during glutamine hydrolysis. Inhibited by the product CTP, via allosteric rather than competitive inhibition. Catalyzes the ATP-dependent amination of UTP to CTP with either L-glutamine or ammonia as the source of nitrogen. Regulates intracellular CTP levels through interactions with the four ribonucleotide triphosphates. This chain is CTP synthase, found in Clostridium beijerinckii (strain ATCC 51743 / NCIMB 8052) (Clostridium acetobutylicum).